The chain runs to 364 residues: Biotin synthase (364 aa).

One can recognise a Radical SAM core domain in the interval C68–R303. The [4Fe-4S] cluster site is built by C86, C90, and C93. Residues C131, C168, C228, and R298 each coordinate [2Fe-2S] cluster.

It belongs to the radical SAM superfamily. Biotin synthase family. Homodimer. Requires [4Fe-4S] cluster as cofactor. [2Fe-2S] cluster is required as a cofactor.

The enzyme catalyses (4R,5S)-dethiobiotin + (sulfur carrier)-SH + 2 reduced [2Fe-2S]-[ferredoxin] + 2 S-adenosyl-L-methionine = (sulfur carrier)-H + biotin + 2 5'-deoxyadenosine + 2 L-methionine + 2 oxidized [2Fe-2S]-[ferredoxin]. It participates in cofactor biosynthesis; biotin biosynthesis; biotin from 7,8-diaminononanoate: step 2/2. Catalyzes the conversion of dethiobiotin (DTB) to biotin by the insertion of a sulfur atom into dethiobiotin via a radical-based mechanism. The chain is Biotin synthase from Microcystis aeruginosa (strain NIES-843 / IAM M-2473).